The following is a 107-amino-acid chain: Phosphoribosyl-ATP pyrophosphatase 1 (107 aa).

It belongs to the PRA-PH family.

The protein resides in the cytoplasm. It catalyses the reaction 1-(5-phospho-beta-D-ribosyl)-ATP + H2O = 1-(5-phospho-beta-D-ribosyl)-5'-AMP + diphosphate + H(+). The protein operates within amino-acid biosynthesis; L-histidine biosynthesis; L-histidine from 5-phospho-alpha-D-ribose 1-diphosphate: step 2/9. This is Phosphoribosyl-ATP pyrophosphatase 1 (hisE1) from Rhodopseudomonas palustris (strain ATCC BAA-98 / CGA009).